Here is a 493-residue protein sequence, read N- to C-terminus: tRNA-2-methylthio-N(6)-dimethylallyladenosine synthase (493 aa).

A compositionally biased stretch (polar residues) spans 1–14; it reads MPMTGLLQTTLSTA. Residues 1–31 form a disordered region; it reads MPMTGLLQTTLSTADQDRSGPAATTGDTPAR. Residues 35–155 enclose the MTTase N-terminal domain; that stretch reads KRLHVITWGC…LGGMVRRAMN (121 aa). Cysteine 44, cysteine 80, cysteine 118, cysteine 199, cysteine 203, and cysteine 206 together coordinate [4Fe-4S] cluster. In terms of domain architecture, Radical SAM core spans 185-417; the sequence is LAGGRTAFLT…QALLRTQQEA (233 aa). Residues 420–482 enclose the TRAM domain; sequence TACIGKTVNV…TNSLSATLPD (63 aa).

This sequence belongs to the methylthiotransferase family. MiaB subfamily. In terms of assembly, monomer. Requires [4Fe-4S] cluster as cofactor.

The protein localises to the cytoplasm. It carries out the reaction N(6)-dimethylallyladenosine(37) in tRNA + (sulfur carrier)-SH + AH2 + 2 S-adenosyl-L-methionine = 2-methylsulfanyl-N(6)-dimethylallyladenosine(37) in tRNA + (sulfur carrier)-H + 5'-deoxyadenosine + L-methionine + A + S-adenosyl-L-homocysteine + 2 H(+). Catalyzes the methylthiolation of N6-(dimethylallyl)adenosine (i(6)A), leading to the formation of 2-methylthio-N6-(dimethylallyl)adenosine (ms(2)i(6)A) at position 37 in tRNAs that read codons beginning with uridine. This is tRNA-2-methylthio-N(6)-dimethylallyladenosine synthase from Granulibacter bethesdensis (strain ATCC BAA-1260 / CGDNIH1).